The primary structure comprises 419 residues: MNIFDELKERGLVFQTTDEDALRKALEEGFVSYYTGYDPTADSLHLGHLVAILTSRRLQLAGHKPYALVGGATGLIGDPSFKDVERSLQTKETVVSWGNKIRGQLSNFLEFETGDNKAVLVNNYDWFSNISFIDFLRDVGKYFTVNYMMSKESVKKRIETGISYTEFAYQIMQGYDFYELNKNYNVTLQIGGSDQWGNMTAGTELIRRKSNGVSHVMTVPLITDSTGKKFGKSEGNAVWLDADKTSPYEMYQFWLNVMDADAVRFLKIFTFLSLKEIEDIRIQFEEAPHQRLAQKTLAREVVTLVHGEKAYKEAVNITEQLFAGNIKGLSVKELKQGLRGVPNYHVQTEDNLNIIDLLVTSGVVNSKRQAREDVSNGAIYINGDRIQDLEYTISENDKLENEITVIRRGKKKYFVLNFK.

L-tyrosine is bound at residue tyrosine 34. The 'HIGH' region signature appears at 39–48 (PTADSLHLGH). Positions 169 and 173 each coordinate L-tyrosine. Positions 229-233 (KFGKS) match the 'KMSKS' region motif. Lysine 232 is a binding site for ATP. Positions 352–419 (LNIIDLLVTS…KKKYFVLNFK (68 aa)) constitute an S4 RNA-binding domain.

The protein belongs to the class-I aminoacyl-tRNA synthetase family. TyrS type 1 subfamily. In terms of assembly, homodimer.

The protein resides in the cytoplasm. It catalyses the reaction tRNA(Tyr) + L-tyrosine + ATP = L-tyrosyl-tRNA(Tyr) + AMP + diphosphate + H(+). Catalyzes the attachment of tyrosine to tRNA(Tyr) in a two-step reaction: tyrosine is first activated by ATP to form Tyr-AMP and then transferred to the acceptor end of tRNA(Tyr). This chain is Tyrosine--tRNA ligase, found in Streptococcus agalactiae serotype Ia (strain ATCC 27591 / A909 / CDC SS700).